A 149-amino-acid chain; its full sequence is Early lymphoid activation gene protein (149 aa).

Expressed in heart, kidney, lung, and skeletal muscle, with lower levels in pancreas and liver.

Functionally, may function as an early signal that helps mediate the activation of T-cells. This Homo sapiens (Human) protein is Early lymphoid activation gene protein (DIAPH2-AS1).